The following is a 470-amino-acid chain: tRNA modification GTPase MnmE (470 aa).

Residues Arg-30, Glu-92, and Arg-132 each coordinate (6S)-5-formyl-5,6,7,8-tetrahydrofolate. The region spanning 227–393 (GLQVALVGRP…LIKAVLKTCG (167 aa)) is the TrmE-type G domain. Residue Asn-237 coordinates K(+). GTP-binding positions include 237–242 (NVGKSS), 256–262 (TDLPGTT), 281–284 (DTAG), and 342–345 (NKAD). A Mg(2+)-binding site is contributed by Ser-241. K(+) contacts are provided by Thr-256, Leu-258, and Thr-261. Thr-262 serves as a coordination point for Mg(2+). A (6S)-5-formyl-5,6,7,8-tetrahydrofolate-binding site is contributed by Lys-470.

The protein belongs to the TRAFAC class TrmE-Era-EngA-EngB-Septin-like GTPase superfamily. TrmE GTPase family. Homodimer. Heterotetramer of two MnmE and two MnmG subunits. K(+) is required as a cofactor.

The protein localises to the cytoplasm. Functionally, exhibits a very high intrinsic GTPase hydrolysis rate. Involved in the addition of a carboxymethylaminomethyl (cmnm) group at the wobble position (U34) of certain tRNAs, forming tRNA-cmnm(5)s(2)U34. This Prochlorococcus marinus (strain MIT 9313) protein is tRNA modification GTPase MnmE.